Consider the following 133-residue polypeptide: S-adenosylmethionine decarboxylase proenzyme (133 aa).

Catalysis depends on Ser-63, which acts as the Schiff-base intermediate with substrate; via pyruvic acid. A Pyruvic acid (Ser); by autocatalysis modification is found at Ser-63. The Proton acceptor; for processing activity role is filled by His-68. Cys-83 acts as the Proton donor; for catalytic activity in catalysis.

Belongs to the prokaryotic AdoMetDC family. Type 1 subfamily. In terms of assembly, heterotetramer of two alpha and two beta chains arranged as a dimer of alpha/beta heterodimers. It depends on pyruvate as a cofactor. Post-translationally, is synthesized initially as an inactive proenzyme. Formation of the active enzyme involves a self-maturation process in which the active site pyruvoyl group is generated from an internal serine residue via an autocatalytic post-translational modification. Two non-identical subunits are generated from the proenzyme in this reaction, and the pyruvate is formed at the N-terminus of the alpha chain, which is derived from the carboxyl end of the proenzyme. The post-translation cleavage follows an unusual pathway, termed non-hydrolytic serinolysis, in which the side chain hydroxyl group of the serine supplies its oxygen atom to form the C-terminus of the beta chain, while the remainder of the serine residue undergoes an oxidative deamination to produce ammonia and the pyruvoyl group blocking the N-terminus of the alpha chain.

It catalyses the reaction S-adenosyl-L-methionine + H(+) = S-adenosyl 3-(methylsulfanyl)propylamine + CO2. Its pathway is amine and polyamine biosynthesis; S-adenosylmethioninamine biosynthesis; S-adenosylmethioninamine from S-adenosyl-L-methionine: step 1/1. In terms of biological role, catalyzes the decarboxylation of S-adenosylmethionine to S-adenosylmethioninamine (dcAdoMet), the propylamine donor required for the synthesis of the polyamines spermine and spermidine from the diamine putrescine. The polypeptide is S-adenosylmethionine decarboxylase proenzyme (Acidithiobacillus ferrooxidans (strain ATCC 23270 / DSM 14882 / CIP 104768 / NCIMB 8455) (Ferrobacillus ferrooxidans (strain ATCC 23270))).